A 70-amino-acid polypeptide reads, in one-letter code: Toxin Isom2 (70 aa).

In terms of domain architecture, LCN-type CS-alpha/beta spans 2–65; sequence KNGYAVDSSG…ISDTRKKYCD (64 aa). Intrachain disulfides connect Cys16–Cys37, Cys22–Cys42, Cys26–Cys44, and Cys38–Cys64.

Expressed by the venom gland.

The protein resides in the secreted. In terms of biological role, excitatory insect beta-toxins induce a spastic paralysis. They bind voltage-independently at site-4 of sodium channels (Nav) and shift the voltage of activation toward more negative potentials thereby affecting sodium channel activation and promoting spontaneous and repetitive firing. This Isometrus vittatus (Bark scorpion) protein is Toxin Isom2.